A 55-amino-acid polypeptide reads, in one-letter code: MAKAAMIKIKLLSTADTGYFYVTKKNARTKTEKLSFKKYDPVVRKHVEFKETKIK.

Belongs to the bacterial ribosomal protein bL33 family.

The protein is Large ribosomal subunit protein bL33 of Beijerinckia indica subsp. indica (strain ATCC 9039 / DSM 1715 / NCIMB 8712).